A 156-amino-acid polypeptide reads, in one-letter code: Transcriptional repressor NrdR (156 aa).

Residues 3-34 fold into a zinc finger; that stretch reads CPFCHSDNDKVQDSRTAEAGYVVRRKRLCQTC. The ATP-cone domain occupies 49-139; sequence VRVVKSDETR…VYRDFDDAKD (91 aa).

It belongs to the NrdR family. Zn(2+) serves as cofactor.

Its function is as follows. Negatively regulates transcription of bacterial ribonucleotide reductase nrd genes and operons by binding to NrdR-boxes. The sequence is that of Transcriptional repressor NrdR from Rhodopirellula baltica (strain DSM 10527 / NCIMB 13988 / SH1).